We begin with the raw amino-acid sequence, 311 residues long: Bifunctional protein FolD (311 aa).

174–176 (GKG) is an NADP(+) binding site.

Belongs to the tetrahydrofolate dehydrogenase/cyclohydrolase family. In terms of assembly, homodimer.

It catalyses the reaction (6R)-5,10-methylene-5,6,7,8-tetrahydrofolate + NADP(+) = (6R)-5,10-methenyltetrahydrofolate + NADPH. The enzyme catalyses (6R)-5,10-methenyltetrahydrofolate + H2O = (6R)-10-formyltetrahydrofolate + H(+). It participates in one-carbon metabolism; tetrahydrofolate interconversion. Its function is as follows. Catalyzes the oxidation of 5,10-methylenetetrahydrofolate to 5,10-methenyltetrahydrofolate and then the hydrolysis of 5,10-methenyltetrahydrofolate to 10-formyltetrahydrofolate. This is Bifunctional protein FolD from Pyrobaculum aerophilum (strain ATCC 51768 / DSM 7523 / JCM 9630 / CIP 104966 / NBRC 100827 / IM2).